The sequence spans 244 residues: Gasdermin-like protein rcd-1-2 (244 aa).

The tract at residues methionine 1 to methionine 22 is disordered.

The protein belongs to the gasdermin family. Heterooligomer; the heterooligomer with rcd-1-1 forms a ring-shaped pore complex when inserted in the membrane.

The protein localises to the cytoplasm. Its subcellular location is the cell membrane. Gasdermin-like protein involved in heterokaryon incompatibility, a process that ensures that during spontaneous vegetative cell fusion, only compatible cells from the same colony survive (non-self-recognition). In N.crassa, the rcd-1 locus exists as 2 incompatible alleles, rcd-1-1 (AC Q7SBA0) and rcd-1-2 (this entry). During the allorecognition process, forms a heterooligomer with rcd-1-1, thereby forming a functional gasdermin-like complex that binds to membranes and forms pores, triggering cell death. Binds negatively charged phospholipids, such as cardiolipin and phosphatidylserine. Also binds to phosphoinositides, preferentially to phosphatidylinositol-3-phosphate (PtdIns-3-P), PtdIns-5-P and PtdIns-3,5-P2. The chain is Gasdermin-like protein rcd-1-2 from Neurospora crassa.